Consider the following 87-residue polypeptide: Selenoprotein W (87 aa).

The segment at residues 10–13 (CGAU) is a cross-link (cysteinyl-selenocysteine (Cys-Sec); redox-active). A non-standard amino acid (selenocysteine) is located at residue U13. Position 37 is an S-glutathionyl cysteine (C37).

Belongs to the SelWTH family. Selenoprotein W subfamily. Interacts with DPYSL2, PRDX1, YWHAB, YWHAG, HSP70 and HSP90. In terms of tissue distribution, highest levels detected in skeletal muscle, tongue, heart and brain. Expressed at significantly higher levels in female skeletal muscle than in male and at slightly higher levels in female cardiac muscle than in male (at protein level). Also detected at low levels in liver.

It is found in the cytoplasm. In terms of biological role, plays a role as a glutathione (GSH)-dependent antioxidant. May be involved in a redox-related process. May play a role in the myopathies of selenium deficiency. This Macaca mulatta (Rhesus macaque) protein is Selenoprotein W.